A 124-amino-acid chain; its full sequence is U-scoloptoxin-Er5d (124 aa).

The first 22 residues, 1 to 22 (MKTNCEFPLLCLLIVLVANVEG), serve as a signal peptide directing secretion. The propeptide occupies 23–94 (EVEDNELKMV…KRLWRNWERR (72 aa)). 3 RLWRNWE repeats span residues 34–40 (RLWRNWE), 61–67 (RLWRNWE), and 86–92 (RLWRNWE). At Gln-95 the chain carries Pyrrolidone carboxylic acid. One copy of the RLWRNWE 4; approximate repeat lies at 107–113 (ELWRNWE). A propeptide spanning residues 112 to 124 (WEDLKRRQVGRFE) is cleaved from the precursor.

This sequence belongs to the scoloptoxin-08 family. In terms of tissue distribution, expressed by the venom gland.

It localises to the secreted. This Ethmostigmus rubripes (Giant centipede) protein is U-scoloptoxin-Er5d.